The chain runs to 515 residues: MVLSQEEPDSARGTSEAQPLGPAPTGAAPPPGPGPSDSPEAAVEKVEVELAGPATAEPHEPPEPPEGGWGWLVMLAAMWCNGSVFGIQNACGVLFVSMLETFGSKDDDKMVFKTAWVGSLSMGMIFFCCPIVSVFTDLFGCRKTAVVGAAVGFVGLMSSSFVSSIEPLYLTYGIIFACGCSFAYQPSLVILGHYFKKRLGLVNGIVTAGSSVFTILLPLLLRVLIDSVGLFYTLRVLCIFMFVLFLAGFTYRPLATSTKDKESGGSGSSLFSRKKFSPPKKIFNFAIFKVTAYAVWAVGIPLALFGYFVPYVHLMKHVNERFQDEKNKEVVLMCIGVTSGVGRLLFGRIADYVPGVKKVYLQVLSFFFIGLMSMMIPLCSIFGALIAVCLIMGLFDGCFISIMAPIAFELVGAQDVSQAIGFLLGFMSIPMTVGPPIAGLLRDKLGSYDVAFYLAGVPPLIGGAVLCFIPWIHSKKQREISKTTGKEKMEKMLENQNSLLSSSSGMFKKESDSII.

Residues 1–48 (MVLSQEEPDSARGTSEAQPLGPAPTGAAPPPGPGPSDSPEAAVEKVEV) form a disordered region. The Cytoplasmic portion of the chain corresponds to 1 to 66 (MVLSQEEPDS…EPHEPPEPPE (66 aa)). Low complexity predominate over residues 17–26 (AQPLGPAPTG). Positions 27–36 (AAPPPGPGPS) are enriched in pro residues. Residues 67–87 (GGWGWLVMLAAMWCNGSVFGI) form a helical membrane-spanning segment. Topologically, residues 88–114 (QNACGVLFVSMLETFGSKDDDKMVFKT) are extracellular. Residues 115 to 135 (AWVGSLSMGMIFFCCPIVSVF) traverse the membrane as a helical segment. Topologically, residues 136–144 (TDLFGCRKT) are cytoplasmic. The helical transmembrane segment at 145–165 (AVVGAAVGFVGLMSSSFVSSI) threads the bilayer. Residues 166 to 171 (EPLYLT) lie on the Extracellular side of the membrane. A helical membrane pass occupies residues 172–192 (YGIIFACGCSFAYQPSLVILG). Over 193-200 (HYFKKRLG) the chain is Cytoplasmic. Residues 201-221 (LVNGIVTAGSSVFTILLPLLL) traverse the membrane as a helical segment. At 222-228 (RVLIDSV) the chain is on the extracellular side. Residues 229 to 249 (GLFYTLRVLCIFMFVLFLAGF) traverse the membrane as a helical segment. Residues 250 to 291 (TYRPLATSTKDKESGGSGSSLFSRKKFSPPKKIFNFAIFKVT) lie on the Cytoplasmic side of the membrane. Serine 263 carries the post-translational modification Phosphoserine. Residues 292-312 (AYAVWAVGIPLALFGYFVPYV) traverse the membrane as a helical segment. Residues 313-329 (HLMKHVNERFQDEKNKE) are Extracellular-facing. A helical membrane pass occupies residues 330 to 350 (VVLMCIGVTSGVGRLLFGRIA). Residue aspartate 351 is a topological domain, cytoplasmic. A helical membrane pass occupies residues 352-372 (YVPGVKKVYLQVLSFFFIGLM). At 373–396 (SMMIPLCSIFGALIAVCLIMGLFD) the chain is on the extracellular side. The helical transmembrane segment at 397–417 (GCFISIMAPIAFELVGAQDVS) threads the bilayer. Residues 418-419 (QA) are Cytoplasmic-facing. Residues 420–440 (IGFLLGFMSIPMTVGPPIAGL) traverse the membrane as a helical segment. The Extracellular segment spans residues 441–451 (LRDKLGSYDVA). The chain crosses the membrane as a helical span at residues 452–472 (FYLAGVPPLIGGAVLCFIPWI). At 473–515 (HSKKQREISKTTGKEKMEKMLENQNSLLSSSSGMFKKESDSII) the chain is on the cytoplasmic side. Phosphoserine is present on residues serine 498, serine 501, serine 503, and serine 504.

This sequence belongs to the major facilitator superfamily. Monocarboxylate porter (TC 2.A.1.13) family. Post-translationally, not N-glycosylated. In terms of tissue distribution, strongly expressed in kidney and skeletal muscle and at lower level in placenta and heart.

Its subcellular location is the cell membrane. It localises to the basolateral cell membrane. It catalyses the reaction 3,3',5-triiodo-L-thyronine(out) = 3,3',5-triiodo-L-thyronine(in). It carries out the reaction L-thyroxine(out) = L-thyroxine(in). The catalysed reaction is L-tryptophan(in) = L-tryptophan(out). The enzyme catalyses L-tyrosine(in) = L-tyrosine(out). It catalyses the reaction L-phenylalanine(in) = L-phenylalanine(out). In terms of biological role, sodium- and proton-independent thyroid hormones and aromatic acids transporter. Mediates both uptake and efflux of 3,5,3'-triiodothyronine (T3) and 3,5,3',5'-tetraiodothyronine (T4) with high affinity, suggesting a role in the homeostasis of thyroid hormone levels. Responsible for low affinity bidirectional transport of the aromatic amino acids, such as phenylalanine, tyrosine, tryptophan and L-3,4-dihydroxyphenylalanine (L-dopa). Plays an important role in homeostasis of aromatic amino acids. This chain is Monocarboxylate transporter 10 (SLC16A10), found in Homo sapiens (Human).